Reading from the N-terminus, the 231-residue chain is Orotidine 5'-phosphate decarboxylase (231 aa).

Substrate contacts are provided by residues Asp11, Lys33, 60-69 (DLKFHDIPNT), Thr120, Arg181, Gln190, Gly210, and Arg211. Lys62 serves as the catalytic Proton donor.

This sequence belongs to the OMP decarboxylase family. Type 1 subfamily. As to quaternary structure, homodimer.

The catalysed reaction is orotidine 5'-phosphate + H(+) = UMP + CO2. It functions in the pathway pyrimidine metabolism; UMP biosynthesis via de novo pathway; UMP from orotate: step 2/2. Its function is as follows. Catalyzes the decarboxylation of orotidine 5'-monophosphate (OMP) to uridine 5'-monophosphate (UMP). This Vibrio cholerae serotype O1 (strain ATCC 39315 / El Tor Inaba N16961) protein is Orotidine 5'-phosphate decarboxylase.